The primary structure comprises 520 residues: Protein-export membrane protein SecD (520 aa).

A run of 6 helical transmembrane segments spans residues 10-30 (IILLVIVVIVSLFALVSPTLA), 364-384 (DSLLAGLVAVFAVSGVVFLRY), 391-411 (LPMIVTALSEVLILLGFAAGI), 417-437 (LSVIAGFITVIGTGVDDLVII), 461-481 (FWVIGAAAATTIIAMSPLAIL), and 483-503 (LGDLQGFAIFTILGVLVGVLI).

Belongs to the SecD/SecF family. SecD subfamily. In terms of assembly, part of the protein translocation apparatus. Forms a complex with SecF.

Its subcellular location is the cell membrane. In terms of biological role, involved in protein export. The polypeptide is Protein-export membrane protein SecD (Haloquadratum walsbyi (strain DSM 16790 / HBSQ001)).